We begin with the raw amino-acid sequence, 453 residues long: Zinc finger CCCH domain-containing protein 26 (453 aa).

Over residues 1 to 15 (MSETQQQVQNSTGSI) the composition is skewed to polar residues. Residues 1-47 (MSETQQQVQNSTGSIRSPDKIEDTFRRMKVNEDNMEQSSPYPDRPGE) are disordered. Ser2 is subject to N-acetylserine. The segment covering 17 to 32 (SPDKIEDTFRRMKVNE) has biased composition (basic and acidic residues). 5 C3H1-type zinc fingers span residues 44-72 (RPGERDCQFFLRTGQCGYGNSCRYNHPLT), 95-112 (ETGACKYGPTCKYHHPKD), 129-157 (RQGEKPCPYYMQTGLCRFGVACKFHHPHP), 261-289 (FSERAECRFFMNTGTCKYGDDCKYSHPKE), and 307-335 (RPGQPACGNFKAYGFCKFGANCKFDHSML). Residues 360 to 379 (STNLRISSPPSPSDMTTLSN) show a composition bias toward polar residues. Positions 360–453 (STNLRISSPP…KVQDSSDKST (94 aa)) are disordered. The segment covering 391-407 (ETEKQDDSPTEPEKSEV) has biased composition (basic and acidic residues). The segment covering 413 to 422 (PNGSDSTSLP) has biased composition (polar residues). Basic and acidic residues predominate over residues 441–453 (DSSKVQDSSDKST).

The protein localises to the nucleus. The polypeptide is Zinc finger CCCH domain-containing protein 26 (ZFN2) (Arabidopsis thaliana (Mouse-ear cress)).